We begin with the raw amino-acid sequence, 32 residues long: Protamine-1 (32 aa).

The tract at residues 1 to 32 (PRRRRASSGRPVRRRRRPKMSRRRRRGGRRRR) is disordered.

In terms of tissue distribution, testis.

The protein localises to the nucleus. The protein resides in the chromosome. Protamines substitute for histones in the chromatin of sperm during the haploid phase of spermatogenesis. They compact sperm DNA into a highly condensed, stable and inactive complex. The chain is Protamine-1 from Esox lucius (Northern pike).